The following is a 186-amino-acid chain: Ribosome-recycling factor (186 aa).

Belongs to the RRF family.

The protein localises to the cytoplasm. Functionally, responsible for the release of ribosomes from messenger RNA at the termination of protein biosynthesis. May increase the efficiency of translation by recycling ribosomes from one round of translation to another. This Maricaulis maris (strain MCS10) (Caulobacter maris) protein is Ribosome-recycling factor.